A 4473-amino-acid polypeptide reads, in one-letter code: Plectin (4473 aa).

2 consecutive Calponin-homology (CH) domains span residues 1-74 (DGHN…LHFQ) and 87-192 (MTAK…DAMP). Residues 1-192 (DGHNLISLLE…YVSSLYDAMP (192 aa)) are actin-binding. A globular 1 region spans residues 1-1259 (DGHNLISLLE…SELTTLTSQY (1259 aa)). The Spectrin 1 repeat unit spans residues 449–508 (RYLQDLLAWVEENQRRIDSAEWGVDLPSVEAQLGSHRGMHQSIEEFRAKIERARNDESQL). Ser509 carries the post-translational modification Phosphoserine. 2 Spectrin repeats span residues 529–613 (KLLN…REDH) and 626–719 (LQTQ…AIVQ). Thr604 carries the post-translational modification Phosphothreonine. One can recognise an SH3 domain in the interval 730 to 787 (RGHVPLMAVCDYKQVEVTVHKGDQCQLVGPAQPSHWKVLRGPSSEAAVPSVCFLVPPP). Ser836 carries the phosphoserine modification. The stretch at 1104-1204 (RERVNQLLER…QKFAKQYINA (101 aa)) is one Spectrin 4 repeat. At Ser1224 the chain carries Phosphoserine. The stretch at 1258-2548 (QYIKFISETL…EEIAATQAAA (1291 aa)) forms a coiled coil. The segment at 1260 to 2544 (IKFISETLRR…LAHSEEIAAT (1285 aa)) is central fibrous rod domain. Disordered regions lie at residues 1274–1293 (ERLAEQQRAEERERLAEGEA) and 1407–1434 (RAEEAEAQKRQAQEEAERLRRQVQDESQ). Ser1510 is subject to Phosphoserine. Lys1514 is subject to N6-acetyllysine. 5 disordered regions span residues 1529–1550 (VTQLREKAERRAQQQAEAERAR), 1582–1616 (SLAQADAEKQKEEAEREARRRGKAEEQAVRQRELA), 1881–1929 (AEDT…AARQ), 1950–1971 (LRERAEQESARQLQLAQEAAQK), and 2003–2098 (ERLR…KHKK). 3 stretches are compositionally biased toward basic and acidic residues: residues 1587–1616 (DAEKQKEEAEREARRRGKAEEQAVRQRELA), 1881–1897 (AEDTMRSKEQAEQEAAR), and 1905–1917 (EEQRRREAEERVQ). A compositionally biased stretch (low complexity) spans 1959–1968 (ARQLQLAQEA). A compositionally biased stretch (basic and acidic residues) spans 2003-2047 (ERLRGEAEAARRAAEEAEEAREQAEREAAQSRKQVEEAERLKQSA). Over residues 2048 to 2061 (EEQAQARAQAQAAA) the composition is skewed to low complexity. Basic and acidic residues predominate over residues 2062 to 2077 (EKLRKEAEQEAARRAQ). Phosphoserine is present on Ser2420. N6-acetyllysine is present on Lys2425. Positions 2457–2476 (REEQQRQQRQMEQEKQELVA) are disordered. The interval 2545-4473 (QAAAAKALPN…SLGGPESAVA (1929 aa)) is globular 2. Ser2563 and Ser2591 each carry phosphoserine. Plectin repeat units lie at residues 2615-2652 (RQYLQGRSSIAGLLLKPTDEKLSVYTALQRQLLSPGTA), 2653-2690 (LILLEAQAASGFLLDPVRNRRLTVNEPVKEGVVGPELH), 2691-2728 (HKLLSAERAVTGYKDPYTGEQISLFQAMKKDLLVRDHA), 2729-2766 (IRLLEAQIATGGIIDTVHSHRVPVDVAYQRGYFDEEMS), and 2770-2804 (ADPGDDTKGFFDPNTHENLTYLQLLERCVEDPETG). The residue at position 2675 (Thr2675) is a Phosphothreonine. The residue at position 2822 (Tyr2822) is a Phosphotyrosine. N6-acetyllysine is present on residues Lys2842 and Lys2880. 5 Plectin repeats span residues 2905–2942 (ALVPAAELLESGVISHELYQQLQRGERSVREVAEADSV), 2943–2980 (RRALRGASVIAGVWLEEAGQKLSIYEALKKDLLQPDVA), 2981–3018 (VALLEAQAGTGHIIDPATSARLTVDEAVRAGLVGPELH), 3019–3056 (EKLLSAEKAVTGYRDPYSGQSVSLFQALKKGLIPREQG), and 3057–3094 (LRLLDAQLSTGGMVDPSKSHRVPLDVAYARGYLDKETN). The residue at position 3151 (Tyr3151) is a Phosphotyrosine. The residue at position 3209 (Lys3209) is an N6-acetyllysine. Plectin repeat units follow at residues 3274–3311 (RTLLQGSGCLAGVYLEDSKEKVTIYEAMRRGLLRPSTA), 3312–3349 (TLLLEAQAATGFLVDPVRNQRLYVHEAVKAGVVGPELH), 3350–3387 (EKLLSAEKAVTGYKDPYSGTTISLFQAMKKGLVLREHA), 3388–3425 (IRLLEAQIATGGIIDPVHSHRLPVDVAYQRGYFDEEMS), and 3429–3463 (ADPSDDTKGFFDPNTHENLTYLQLLERCVEDPETG). At Thr3574 the chain carries Phosphothreonine. Position 3579 is a phosphotyrosine (Tyr3579). Plectin repeat units lie at residues 3609–3646 (WRYLYGTGSVAGVYLPGSRQTLTIYQALKKGLLSAEVA), 3647–3684 (RLLLEAQAATGFLLDPVKGERLTVDEAVRKGLVGPELH), 3685–3722 (DRLLSAERAVTGYRDPYTEQTISLFQAMKKELIPAEEA), 3723–3760 (LRLLDAQLATGGIVDPRLGFHLPLEVAYQRGYLNKDTH), 3764–3797 (SEPSEVRSYVDPSTDERLSYTQLLKRCRRDDGSG), and 3800–3834 (LLPLSDARRLTFRGLRKQITVEELVRSQVMDEATA). Phosphothreonine is present on Thr3819. Ser3843 is subject to Phosphoserine. 6 Plectin repeats span residues 3852–3889 (QKFLEGTSCIAGVFVDATKERLSVYQAMKKGIIRPGTA), 3890–3927 (FELLEAQAATGYVIDPIKGLKLTVEEAVRMGIVGPEFK), 3928–3965 (DRLLSAERAVTGYKDPYSGKLISLFQAMKKGLILKDHG), 3966–4003 (IRLLEAQIATGGIIDPEESHRLPVEVAYKRGLFDEEMN), 4007–4041 (TDPSDDTKGFFDPNTEENLTYLQLMERCITDPQTG), and 4043–4094 (RLLP…HQTY). Residues 4039–4089 (QTGLRLLPLKEKKRERKTSSKSSVRKRRVVIVDPETSKEMSVYEAYRKGLI) are binding to intermediate filaments. 8 positions are modified to phosphoserine: Ser4171, Ser4173, Ser4174, Ser4175, Ser4178, Ser4179, Ser4180, and Ser4181. Phosphotyrosine is present on Tyr4182. Residues Ser4185, Ser4189, and Ser4195 each carry the phosphoserine modification. Plectin repeat units lie at residues 4197 to 4234 (SDPTEETGPVAGILDTETLEKVSITEAMHRNLVDNITG), 4235 to 4272 (QRLLEAQACTGGIIDPSTGERFPVTEAVNKGLVDKIMV), 4273 to 4310 (DRINLAQKAFCGFEDPRTKTKMSAAQALKKGWLYYEAG), 4311 to 4348 (QRFLEVQYLTGGLIEPDTPGRVPLDEALQRGTVDARTA), and 4349 to 4386 (QKLRDVSAYSKYLTCPKTKLKISYKDALDRSMVEEGTG). Thr4200 carries the phosphothreonine modification. Position 4328 is a phosphothreonine; by CDK1 (Thr4328). 2 positions are modified to phosphoserine: Ser4396 and Ser4402. Positions 4400-4460 (YYSPYSVSGS…SGYGRRYASG (61 aa)) are enriched in low complexity. The interval 4400-4473 (YYSPYSVSGS…SLGGPESAVA (74 aa)) is disordered. Tyr4404 is subject to Phosphotyrosine. 3 positions are modified to phosphoserine: Ser4405, Ser4407, and Ser4411. A Phosphothreonine modification is found at Thr4412. The tract at residues 4414–4429 (GSRTGSRTGSRAGSRR) is 4 X 4 AA tandem repeats of G-S-R-X. Ser4415 is subject to Phosphoserine. An omega-N-methylarginine mark is found at Arg4416 and Arg4429. Residues Ser4431 and Ser4464 each carry the phosphoserine modification.

This sequence belongs to the plakin or cytolinker family. Homodimer or homotetramer. Interacts (via actin-binding domain) with SYNE3. Interacts (via calponin-homology (CH) 1 domain) with VIM (via rod region). Interacts (via N-terminus) with DST isoform 2 (via N-terminus). Interacts with FER. Interacts with TOR1A. Interacts with ANK3. Identified in complexes that contain VIM, EZR, AHNAK, BFSP1, BFSP2, ANK2, PLEC, PRX and spectrin. Post-translationally, phosphorylated by CDK1; regulates dissociation from intermediate filaments during mitosis.

It localises to the cytoplasm. It is found in the cytoskeleton. The protein resides in the cell junction. The protein localises to the hemidesmosome. Its subcellular location is the cell projection. It localises to the podosome. In terms of biological role, interlinks intermediate filaments with microtubules and microfilaments and anchors intermediate filaments to desmosomes or hemidesmosomes. May be involved not only in the cross-linking and stabilization of cytoskeletal intermediate filaments network, but also in the regulation of their dynamics. This is Plectin (PLEC) from Cricetulus griseus (Chinese hamster).